The primary structure comprises 1008 residues: Phytosulfokine receptor 1 (1008 aa).

Residues 1 to 25 (MRVHRFCVIVIFLTELLCFFYSSES) form the signal peptide. Asparagine 55, asparagine 64, and asparagine 73 each carry an N-linked (GlcNAc...) asparagine glycan. LRR repeat units follow at residues 75–98 (TGRV…SLGK), 99–123 (LDEI…IFNL), 124–148 (KNLQ…NLPA), 150–170 (QSFD…ICHN), 172–194 (TQIR…GFGK), 195–219 (CVLL…LFHL), 221–243 (RLNL…IRNL), 244–266 (SSLV…VFDE), 291–315 (SPSL…CTAM), 316–339 (IALN…LPDC), 341–362 (RLKN…SFKN), and 363–387 (FESL…GILQ). N-linked (GlcNAc...) asparagine glycosylation occurs at asparagine 106. Residues asparagine 160, asparagine 170, and asparagine 187 are each glycosylated (N-linked (GlcNAc...) asparagine). N-linked (GlcNAc...) asparagine glycosylation occurs at asparagine 242. Arginine 300 is a binding site for phytosulfokine. N-linked (GlcNAc...) asparagine glycosylation is found at asparagine 301 and asparagine 311. Phytosulfokine is bound by residues asparagine 346, serine 370, and serine 372. 3 N-linked (GlcNAc...) asparagine glycosylation sites follow: asparagine 373, asparagine 378, and asparagine 391. LRR repeat units lie at residues 392–414 (LTTL…SLHF), 415–438 (EKLK…LSSS), 439–464 (NELQ…DFKA), and 466–486 (FYLD…LTKL). Residues threonine 398, asparagine 424, and aspartate 445 each contribute to the phytosulfokine site. N-linked (GlcNAc...) asparagine glycosylation is found at asparagine 472 and asparagine 493. Position 508 (lysine 508) interacts with phytosulfokine. 2 N-linked (GlcNAc...) asparagine glycosylation sites follow: asparagine 510 and asparagine 534. LRR repeat units follow at residues 521–545 (IFGF…EFGN), 546–570 (LKKL…LSGM), 571–594 (TSLE…LQQL), and 596–619 (FLSK…QFQT). N-linked (GlcNAc...) asparagine glycans are attached at residues asparagine 606 and asparagine 622. A helical transmembrane segment spans residues 660–680 (MAIGIAFGSVFLLTLLSLIVL). Phosphothreonine is present on threonine 731. Residues 734 to 1005 (FDQANIIGCG…PTTQQLVSWL (272 aa)) enclose the Protein kinase domain. ATP-binding positions include 740–748 (IGCGGFGMV) and lysine 762. Phosphotyrosine occurs at positions 807 and 847. Aspartate 860 functions as the Proton acceptor in the catalytic mechanism. Tyrosine 902 bears the Phosphotyrosine mark.

Belongs to the protein kinase superfamily. Ser/Thr protein kinase family. As to quaternary structure, homo- and heterodimers with PSY1R. Heterodimers with the somatic embryogenesis receptor-like kinases (SERKs). PSK is not directly involved in PSKR-SERK interaction but stabilizes PSKR island domain for recruitment of a SERK. Part of a functional complex containing PSKR1, BAK1, CNGC17, and AHA. Interacts with AHA1, AHA2, and BAK1, but not with CNGC17 or BRI1. It depends on Mg(2+) as a cofactor. The cofactor is Mn(2+). Weakly expressed in roots, leaves, stems and flowers. Expressed in the primary and lateral roots, including root primordia and root tips, but not in the hypocotyl.

It localises to the cell membrane. The enzyme catalyses L-seryl-[protein] + ATP = O-phospho-L-seryl-[protein] + ADP + H(+). The catalysed reaction is L-threonyl-[protein] + ATP = O-phospho-L-threonyl-[protein] + ADP + H(+). It catalyses the reaction GTP = 3',5'-cyclic GMP + diphosphate. Its activity is regulated as follows. cGMP suppresses kinase activity. Its function is as follows. Phytosulfokine receptor with both a serine/threonine-protein kinase activity and a guanylate cyclase activity. Regulates, in response to phytosulfokine binding, a signaling cascade involved in plant cell differentiation, organogenesis, somatic embryogenesis, cellular proliferation and plant growth. Involved in plant immunity, with antagonistic effects on bacterial and fungal resistances. Not involved in PSY perception. CNGC17 and AHAs form a functional cation-translocating unit that is activated by PSKR1/BAK1 and possibly other BAK1/RLK complexes. The sequence is that of Phytosulfokine receptor 1 from Arabidopsis thaliana (Mouse-ear cress).